An 828-amino-acid chain; its full sequence is Periplasmic nitrate reductase (828 aa).

Positions 1 to 31 (MKLSRRSFMKANAVAAAAAAAGLSVPGVARA) form a signal peptide, tat-type signal. Residues 39-95 (IKWDKAPCRFCGTGCGVLVGTQQGRVVACQGDPDAPVNRGLNCIKGYFLPKIMYGKD) enclose the 4Fe-4S Mo/W bis-MGD-type domain. Residues Cys-46, Cys-49, Cys-53, and Cys-81 each coordinate [4Fe-4S] cluster. Mo-bis(molybdopterin guanine dinucleotide) is bound by residues Lys-83, Gln-150, Asn-175, Cys-179, 212 to 219 (WGANMAEM), 243 to 247 (STYQH), 262 to 264 (QSD), Met-372, Gln-376, Asn-482, 508 to 509 (SD), Lys-531, Asp-558, and 718 to 727 (TGRVLEHWHT). Substrate is bound at residue Phe-794. Asn-802 and Lys-819 together coordinate Mo-bis(molybdopterin guanine dinucleotide).

The protein belongs to the prokaryotic molybdopterin-containing oxidoreductase family. NasA/NapA/NarB subfamily. Component of the periplasmic nitrate reductase NapAB complex composed of NapA and NapB. [4Fe-4S] cluster serves as cofactor. Requires Mo-bis(molybdopterin guanine dinucleotide) as cofactor. Post-translationally, predicted to be exported by the Tat system. The position of the signal peptide cleavage has not been experimentally proven.

The protein resides in the periplasm. The catalysed reaction is 2 Fe(II)-[cytochrome] + nitrate + 2 H(+) = 2 Fe(III)-[cytochrome] + nitrite + H2O. In terms of biological role, catalytic subunit of the periplasmic nitrate reductase complex NapAB. Receives electrons from NapB and catalyzes the reduction of nitrate to nitrite. The protein is Periplasmic nitrate reductase of Escherichia coli O9:H4 (strain HS).